Consider the following 289-residue polypeptide: MFGSAHGDTTSSDTSGRRPLRLVVLPLLLALSSCKVDLYTQLQEREANEIVALLMDNGVDAVRVAGKDGTSTIQVDEKLLAFSIKLLNGKGLPRQSFKNLGEIFQGSGLIASPTEERARYVYALSEELSHTISDIDGVFSARVHVVLPHNDLLRAGDTPSSASVFIRHDAKTNLPALLPKIKMLVAESIEGLAYDKVEVVLVPVERSAQEQRSLLEPDLAQASRPIPVPLLAVAVGVGAAVFAVTCYLLFIVLGHRRRQLTGELSRVQERPGVSALAAIRKKIPALGRR.

An N-terminal signal peptide occupies residues 1–33; the sequence is MFGSAHGDTTSSDTSGRRPLRLVVLPLLLALSS. A lipid anchor (N-palmitoyl cysteine) is attached at Cys-34. Cys-34 carries S-diacylglycerol cysteine lipidation. A helical transmembrane segment spans residues 233-253; it reads VAVGVGAAVFAVTCYLLFIVL.

This sequence belongs to the YscJ lipoprotein family.

The protein localises to the cell outer membrane. In terms of biological role, regulates cultivar-specific nodulation of soybean. This chain is Nodulation protein NolT (nolT), found in Rhizobium fredii (Sinorhizobium fredii).